We begin with the raw amino-acid sequence, 597 residues long: Membrane protein insertase YidC (597 aa).

Residues 8 to 28 (YFVAIALSVLILIAWQFFYVS) form a helical membrane-spanning segment. Residues 38 to 75 (AEKAQQAQSQPGTQQAAPGQAAPGQALPGGAIPSAAES) form a disordered region. Residues 41–70 (AQQAQSQPGTQQAAPGQAAPGQALPGGAIP) are compositionally biased toward low complexity. Transmembrane regions (helical) follow at residues 372-392 (LFGN…LIFF), 446-466 (WPIL…YVTI), 491-511 (LFGL…WPIV), and 535-555 (FTWM…GLVI).

This sequence belongs to the OXA1/ALB3/YidC family. Type 1 subfamily. In terms of assembly, interacts with the Sec translocase complex via SecD. Specifically interacts with transmembrane segments of nascent integral membrane proteins during membrane integration.

The protein resides in the cell inner membrane. Required for the insertion and/or proper folding and/or complex formation of integral membrane proteins into the membrane. Involved in integration of membrane proteins that insert both dependently and independently of the Sec translocase complex, as well as at least some lipoproteins. Aids folding of multispanning membrane proteins. In Sinorhizobium medicae (strain WSM419) (Ensifer medicae), this protein is Membrane protein insertase YidC.